We begin with the raw amino-acid sequence, 178 residues long: Interleukin-10 (178 aa).

The signal sequence occupies residues Met-1–Thr-18. The N-linked (GlcNAc...) asparagine glycan is linked to Asn-29. Cystine bridges form between Cys-30–Cys-126 and Cys-80–Cys-132. N-linked (GlcNAc...) asparagine glycosylation occurs at Asn-134.

This sequence belongs to the IL-10 family. Homodimer. Interacts with IL10RA and IL10RB.

The protein localises to the secreted. Major immune regulatory cytokine that acts on many cells of the immune system where it has profound anti-inflammatory functions, limiting excessive tissue disruption caused by inflammation. Mechanistically, IL10 binds to its heterotetrameric receptor comprising IL10RA and IL10RB leading to JAK1 and STAT2-mediated phosphorylation of STAT3. In turn, STAT3 translocates to the nucleus where it drives expression of anti-inflammatory mediators. Targets antigen-presenting cells (APCs) such as macrophages and monocytes and inhibits their release of pro-inflammatory cytokines including granulocyte-macrophage colony-stimulating factor /GM-CSF, granulocyte colony-stimulating factor/G-CSF, IL-1 alpha, IL-1 beta, IL-6, IL-8 and TNF-alpha. Also interferes with antigen presentation by reducing the expression of MHC-class II and co-stimulatory molecules, thereby inhibiting their ability to induce T cell activation. In addition, controls the inflammatory response of macrophages by reprogramming essential metabolic pathways including mTOR signaling. In Rattus norvegicus (Rat), this protein is Interleukin-10 (Il10).